We begin with the raw amino-acid sequence, 110 residues long: MKGWLFLVIAIVGEVIATSALKSSEGFTKLAPSAVVIIGYGIAFYFLSLVLKSIPVGVAYAVWSGLGVVIITAIAWLLHGQKLDAWGFVGMGLIVSGVVVLNLLSKASAH.

The next 4 helical transmembrane spans lie at 1 to 21, 30 to 50, 58 to 78, and 85 to 105; these read MKGW…TSAL, LAPS…LSLV, VAYA…AWLL, and AWGF…NLLS.

It belongs to the drug/metabolite transporter (DMT) superfamily. Small multidrug resistance (SMR) (TC 2.A.7.1) family.

It localises to the cell membrane. Its function is as follows. Multidrug exporter. Is implicated for the resistance to bacteriocidal quaternary ammonium compounds. This Escherichia coli protein is Quaternary ammonium compound-resistance protein QacE (qacE).